Here is a 642-residue protein sequence, read N- to C-terminus: Threonine--tRNA ligase (642 aa).

Residues 1-61 enclose the TGS domain; it reads MPVITLPDGS…DADATVAIIT (61 aa). The interval 243–534 is catalytic; that stretch reads DHRKIGKQLD…LTEEFAGFFP (292 aa). Positions 334, 385, and 511 each coordinate Zn(2+).

The protein belongs to the class-II aminoacyl-tRNA synthetase family. In terms of assembly, homodimer. Requires Zn(2+) as cofactor.

It is found in the cytoplasm. It catalyses the reaction tRNA(Thr) + L-threonine + ATP = L-threonyl-tRNA(Thr) + AMP + diphosphate + H(+). In terms of biological role, catalyzes the attachment of threonine to tRNA(Thr) in a two-step reaction: L-threonine is first activated by ATP to form Thr-AMP and then transferred to the acceptor end of tRNA(Thr). Also edits incorrectly charged L-seryl-tRNA(Thr). In Edwardsiella ictaluri (strain 93-146), this protein is Threonine--tRNA ligase.